The following is a 413-amino-acid chain: Gamma-glutamyl phosphate reductase (413 aa).

This sequence belongs to the gamma-glutamyl phosphate reductase family.

The protein localises to the cytoplasm. It carries out the reaction L-glutamate 5-semialdehyde + phosphate + NADP(+) = L-glutamyl 5-phosphate + NADPH + H(+). It functions in the pathway amino-acid biosynthesis; L-proline biosynthesis; L-glutamate 5-semialdehyde from L-glutamate: step 2/2. In terms of biological role, catalyzes the NADPH-dependent reduction of L-glutamate 5-phosphate into L-glutamate 5-semialdehyde and phosphate. The product spontaneously undergoes cyclization to form 1-pyrroline-5-carboxylate. The sequence is that of Gamma-glutamyl phosphate reductase from Caulobacter vibrioides (strain ATCC 19089 / CIP 103742 / CB 15) (Caulobacter crescentus).